An 824-amino-acid polypeptide reads, in one-letter code: Leucine--tRNA ligase (824 aa).

The short motif at 42 to 52 is the 'HIGH' region element; the sequence is PYPSGHLHMGH. The 'KMSKS' region signature appears at 581 to 585; the sequence is KMSKS. K584 is an ATP binding site.

This sequence belongs to the class-I aminoacyl-tRNA synthetase family.

The protein resides in the cytoplasm. The catalysed reaction is tRNA(Leu) + L-leucine + ATP = L-leucyl-tRNA(Leu) + AMP + diphosphate. This is Leucine--tRNA ligase from Syntrophomonas wolfei subsp. wolfei (strain DSM 2245B / Goettingen).